The primary structure comprises 406 residues: DNA-binding transcriptional repressor Mlc (406 aa).

Positions 33 to 42 form a DNA-binding region, H-T-H motif; sequence RIDLSRLAQL. Positions 247, 257, 259, and 264 each coordinate Zn(2+).

It belongs to the ROK (NagC/XylR) family. In terms of assembly, homodimer. Homotetramer. There is probably an equilibrium between the dimeric and the tetrameric form. Interacts with dephosphorylated PtsG. Mlc and PtsG EIIB domain form a complex with the 1:1 stoichiometry. Interacts with MtfA.

It localises to the cytoplasm. With respect to regulation, activity is modulated by glucose. In the presence of glucose, is inhibited by interaction with the dephosphorylated form of PtsG, which sequesters Mlc in the inner membrane and prevents Mlc binding to its target promoters. The restriction of conformational freedom resulting from the anchoring of four ends of Mlc to the membrane could be the primary cause of its loss of DNA-binding activity in vivo. Activity is also inhibited by interaction with the Mlc titration factor A (mtfA). The inactivation mechanisms of Mlc by dephosphorylated PtsG and MtfA differ significantly. In terms of biological role, global regulator of carbohydrate metabolism. Represses the expression of several genes involved in sugar transport and utilization, in particular phosphoenolpyruvate-carbohydrate phosphotransferase system (PTS) genes. Represses expression of ptsG (EIICB(Glc)), which encodes the PTS system glucose-specific EIICB component. Also represses the expression of the manXYZ operon, encoding the mannose-specific PTS system, expression of malT, encoding the transcriptional activator of the maltose regulon, and expression of the pts operon, composed of the genes ptsH, ptsI and crr. Represses its own expression. Acts by binding to the regulatory region of the target genes. This Escherichia coli (strain K12) protein is DNA-binding transcriptional repressor Mlc.